We begin with the raw amino-acid sequence, 177 residues long: Adenine phosphoribosyltransferase (177 aa).

This sequence belongs to the purine/pyrimidine phosphoribosyltransferase family. Homodimer.

The protein resides in the cytoplasm. The catalysed reaction is AMP + diphosphate = 5-phospho-alpha-D-ribose 1-diphosphate + adenine. The protein operates within purine metabolism; AMP biosynthesis via salvage pathway; AMP from adenine: step 1/1. Functionally, catalyzes a salvage reaction resulting in the formation of AMP, that is energically less costly than de novo synthesis. The sequence is that of Adenine phosphoribosyltransferase from Chlorobium luteolum (strain DSM 273 / BCRC 81028 / 2530) (Pelodictyon luteolum).